Reading from the N-terminus, the 467-residue chain is Acid phosphatase PHO12 (467 aa).

Residues 1–17 (MLKSAVYSILAASLVNA) form the signal peptide. His-75 serves as the catalytic Nucleophile. Asn-97, Asn-162, Asn-192, Asn-250, and Asn-315 each carry an N-linked (GlcNAc...) asparagine glycan. The active-site Proton donor is Asp-338. N-linked (GlcNAc...) asparagine glycans are attached at residues Asn-356, Asn-390, Asn-439, Asn-445, and Asn-461.

The protein belongs to the histidine acid phosphatase family. Glycosylated during secretion across the membrane.

It carries out the reaction a phosphate monoester + H2O = an alcohol + phosphate. The polypeptide is Acid phosphatase PHO12 (PHO12) (Saccharomyces cerevisiae (strain ATCC 204508 / S288c) (Baker's yeast)).